The chain runs to 342 residues: Holliday junction branch migration complex subunit RuvB (342 aa).

The tract at residues 1-179 is large ATPase domain (RuvB-L); it reads MTNILSPEKI…FGIPMRLNFY (179 aa). ATP is bound by residues I18, R19, G60, K63, T64, T65, 126 to 128, R169, Y179, and R216; that span reads EDF. T64 serves as a coordination point for Mg(2+). Residues 180–250 are small ATPAse domain (RuvB-S); sequence NTEELKKVLN…ISDFGLNRLE (71 aa). The segment at 253-342 is head domain (RuvB-H); that stretch reads HIGLDSNDYR…HQFNIFNENE (90 aa). DNA-binding residues include R289, R308, and R313.

The protein belongs to the RuvB family. In terms of assembly, homohexamer. Forms an RuvA(8)-RuvB(12)-Holliday junction (HJ) complex. HJ DNA is sandwiched between 2 RuvA tetramers; dsDNA enters through RuvA and exits via RuvB. An RuvB hexamer assembles on each DNA strand where it exits the tetramer. Each RuvB hexamer is contacted by two RuvA subunits (via domain III) on 2 adjacent RuvB subunits; this complex drives branch migration. In the full resolvosome a probable DNA-RuvA(4)-RuvB(12)-RuvC(2) complex forms which resolves the HJ.

The protein resides in the cytoplasm. The enzyme catalyses ATP + H2O = ADP + phosphate + H(+). Functionally, the RuvA-RuvB-RuvC complex processes Holliday junction (HJ) DNA during genetic recombination and DNA repair, while the RuvA-RuvB complex plays an important role in the rescue of blocked DNA replication forks via replication fork reversal (RFR). RuvA specifically binds to HJ cruciform DNA, conferring on it an open structure. The RuvB hexamer acts as an ATP-dependent pump, pulling dsDNA into and through the RuvAB complex. RuvB forms 2 homohexamers on either side of HJ DNA bound by 1 or 2 RuvA tetramers; 4 subunits per hexamer contact DNA at a time. Coordinated motions by a converter formed by DNA-disengaged RuvB subunits stimulates ATP hydrolysis and nucleotide exchange. Immobilization of the converter enables RuvB to convert the ATP-contained energy into a lever motion, pulling 2 nucleotides of DNA out of the RuvA tetramer per ATP hydrolyzed, thus driving DNA branch migration. The RuvB motors rotate together with the DNA substrate, which together with the progressing nucleotide cycle form the mechanistic basis for DNA recombination by continuous HJ branch migration. Branch migration allows RuvC to scan DNA until it finds its consensus sequence, where it cleaves and resolves cruciform DNA. This Rickettsia felis (strain ATCC VR-1525 / URRWXCal2) (Rickettsia azadi) protein is Holliday junction branch migration complex subunit RuvB.